We begin with the raw amino-acid sequence, 399 residues long: Chorismate synthase (399 aa).

NADP(+)-binding residues include arginine 40 and arginine 46. FMN-binding positions include 129–131 (RSS), 257–258 (QA), glycine 302, 317–321 (KPISS), and arginine 343.

It belongs to the chorismate synthase family. Homotetramer. FMNH2 is required as a cofactor.

The enzyme catalyses 5-O-(1-carboxyvinyl)-3-phosphoshikimate = chorismate + phosphate. Its pathway is metabolic intermediate biosynthesis; chorismate biosynthesis; chorismate from D-erythrose 4-phosphate and phosphoenolpyruvate: step 7/7. Its function is as follows. Catalyzes the anti-1,4-elimination of the C-3 phosphate and the C-6 proR hydrogen from 5-enolpyruvylshikimate-3-phosphate (EPSP) to yield chorismate, which is the branch point compound that serves as the starting substrate for the three terminal pathways of aromatic amino acid biosynthesis. This reaction introduces a second double bond into the aromatic ring system. The chain is Chorismate synthase from Chlorobium chlorochromatii (strain CaD3).